A 353-amino-acid polypeptide reads, in one-letter code: Photosystem II D2 protein (353 aa).

Threonine 2 is subject to N-acetylthreonine. Threonine 2 carries the phosphothreonine modification. The helical transmembrane segment at 41–61 (CAYFALGGWFTGTTFVTSWYT) threads the bilayer. Residue histidine 118 participates in chlorophyll a binding. The helical transmembrane segment at 125–141 (GFMLRQFELARSVQLRP) threads the bilayer. Pheophytin a-binding residues include glutamine 130 and asparagine 143. A helical transmembrane segment spans residues 153 to 166 (VFVSVFLIYPLGQS). Histidine 198 serves as a coordination point for chlorophyll a. A helical membrane pass occupies residues 208–228 (AALLCAIHGATVENTLFEDGD). A plastoquinone-binding residues include histidine 215 and phenylalanine 262. Histidine 215 serves as a coordination point for Fe cation. Fe cation is bound at residue histidine 269. The helical transmembrane segment at 279-295 (GLWMSALGVVGLALNLR) threads the bilayer.

This sequence belongs to the reaction center PufL/M/PsbA/D family. PSII is composed of 1 copy each of membrane proteins PsbA, PsbB, PsbC, PsbD, PsbE, PsbF, PsbH, PsbI, PsbJ, PsbK, PsbL, PsbM, PsbT, PsbX, PsbY, PsbZ, Psb30/Ycf12, at least 3 peripheral proteins of the oxygen-evolving complex and a large number of cofactors. It forms dimeric complexes. Requires The D1/D2 heterodimer binds P680, chlorophylls that are the primary electron donor of PSII, and subsequent electron acceptors. It shares a non-heme iron and each subunit binds pheophytin, quinone, additional chlorophylls, carotenoids and lipids. There is also a Cl(-1) ion associated with D1 and D2, which is required for oxygen evolution. The PSII complex binds additional chlorophylls, carotenoids and specific lipids. as cofactor.

Its subcellular location is the plastid. It is found in the chloroplast thylakoid membrane. It carries out the reaction 2 a plastoquinone + 4 hnu + 2 H2O = 2 a plastoquinol + O2. Functionally, photosystem II (PSII) is a light-driven water:plastoquinone oxidoreductase that uses light energy to abstract electrons from H(2)O, generating O(2) and a proton gradient subsequently used for ATP formation. It consists of a core antenna complex that captures photons, and an electron transfer chain that converts photonic excitation into a charge separation. The D1/D2 (PsbA/PsbD) reaction center heterodimer binds P680, the primary electron donor of PSII as well as several subsequent electron acceptors. D2 is needed for assembly of a stable PSII complex. This is Photosystem II D2 protein from Phaseolus vulgaris (Kidney bean).